The following is a 445-amino-acid chain: Xylose isomerase (445 aa).

Residues His107 and Asp110 contribute to the active site. 7 residues coordinate Mg(2+): Glu238, Glu274, His277, Asp302, Asp313, Asp315, and Asp345.

Belongs to the xylose isomerase family. In terms of assembly, homotetramer. It depends on Mg(2+) as a cofactor.

It localises to the cytoplasm. The catalysed reaction is alpha-D-xylose = alpha-D-xylulofuranose. In Bacillus subtilis (strain 168), this protein is Xylose isomerase (xylA).